The following is a 208-amino-acid chain: ATP-dependent Clp protease proteolytic subunit (208 aa).

The active-site Nucleophile is Ser107. His132 is an active-site residue.

Belongs to the peptidase S14 family. Fourteen ClpP subunits assemble into 2 heptameric rings which stack back to back to give a disk-like structure with a central cavity, resembling the structure of eukaryotic proteasomes.

The protein localises to the cytoplasm. It carries out the reaction Hydrolysis of proteins to small peptides in the presence of ATP and magnesium. alpha-casein is the usual test substrate. In the absence of ATP, only oligopeptides shorter than five residues are hydrolyzed (such as succinyl-Leu-Tyr-|-NHMec, and Leu-Tyr-Leu-|-Tyr-Trp, in which cleavage of the -Tyr-|-Leu- and -Tyr-|-Trp bonds also occurs).. In terms of biological role, cleaves peptides in various proteins in a process that requires ATP hydrolysis. Has a chymotrypsin-like activity. Plays a major role in the degradation of misfolded proteins. The polypeptide is ATP-dependent Clp protease proteolytic subunit (Methylorubrum populi (strain ATCC BAA-705 / NCIMB 13946 / BJ001) (Methylobacterium populi)).